Consider the following 998-residue polypeptide: MIVTPLKHSGIHLSSGTLQRRNMPLDAVFIDSIPSGTLTPLKDLVKYQKSSLKVNGHKKNQLLEIRTSNNKDLFQSTMLSEATLPNSSLDISVIKPSMDRLRNEMIYESPGKIFQRMKAKVQRDKQEQLTRSSSMLGSPQGEHTKDFPPNTDKKAQLQQTYICEEKQTSVQSNDPSLGDPPILNQEQKNVSASCISKKALTRAQFGGQVLHSKESPVRITVSKKNTFVLGGIDCTYEKFENTDVNTISSLCVPIKNHSQSITSDNDVTTERTAKEDITEPNEEMMSRRTILQDPIKNTSKIKRSSPRPNLTLSGRSQRKCTKLETVVKEVKKYQAVHLQEWMIKVINNNTAICVEGKLVDMTDVYWHSNVIIERIKHNELRTLSGNIYILKGLIDSVSMKEAGYPCYLTRKFMFGFPHNWKEHIDKFLEQLRAEKKNKTRQETARVQEKQKSKKKDAEDKETYVLQKASITYDLNDNSLERTEVPTDPLNSLEQPTSGKERRHPLLSQKRAYVLITPLRNKKLIEQRCIDYSLSIEGISDFFKAKHQEESDSDIHGTPSSTSKSQETFEHRVGFEGNTKEDCNECDIITARHIQIPCPKSKQMLTNDFMKKNKLPSKLQKTENQIGVSQYCRSSSHLSSEENEVEIKSRTRARNTKERLNRERENTNHITKDILLISETEGERACYITPKRPRSCYITPKRPRSSAKESHYKSAVSKDFLTEGKASDRTSRQLLDHLPGLTDDEEWSEQELQKLHCAFTSLPKHKPGFWSDVAMAVGSRTADECQKKYTEEPQGQGSRKHGSKKKQANKVQNGEKDSADAKTIKITAKVGTLKRKRQMRDCLEHLAKDNHDDFFTATPLQKQRIQLPSFQYSQDDDFLLDMDRDPASPSSIITSPLRSTTPQCQHFSPSMLAAIERNNCDRYVYQMQKNAKKYGKSNGGLVWGNIRKKTVKTDLSSPPPTRKALFNKDLGKNTDISKYFIDDTESDEEEKDYYFSNSD.

K7 is covalently cross-linked (Glycyl lysine isopeptide (Lys-Gly) (interchain with G-Cter in SUMO2)). Phosphoserine occurs at positions 9, 109, and 134. A disordered region spans residues Q122–K153. The span at E142 to K153 shows a compositional bias: basic and acidic residues. Phosphoserine occurs at positions 169 and 258. One can recognise an SANTA domain in the interval V336–E422. Disordered regions lie at residues K438–K460 and D476–R502. Over residues P488 to S497 the composition is skewed to polar residues. A phosphothreonine mark is found at T516 and T578. Phosphoserine occurs at positions 638 and 639. Positions S638–N660 are disordered. A compositionally biased stretch (basic and acidic residues) spans V644–N660. Phosphothreonine is present on T688. K707 is covalently cross-linked (Glycyl lysine isopeptide (Lys-Gly) (interchain with G-Cter in SUMO2)). A Phosphoserine modification is found at S726. An SANT domain is found at T741–G796. K765 participates in a covalent cross-link: Glycyl lysine isopeptide (Lys-Gly) (interchain with G-Cter in SUMO2). The tract at residues C784–K821 is disordered. The span at S797–A807 shows a compositional bias: basic residues. The span at N812 to K821 shows a compositional bias: basic and acidic residues. Glycyl lysine isopeptide (Lys-Gly) (interchain with G-Cter in SUMO2) cross-links involve residues K821, K828, and K847. Residue S872 is modified to Phosphoserine. A Glycyl lysine isopeptide (Lys-Gly) (interchain with G-Cter in SUMO2) cross-link involves residue K948. Phosphoserine occurs at positions 955 and 985. The segment at S976–D998 is disordered. Residues D981 to K990 show a composition bias toward acidic residues.

In terms of assembly, interacts with SP1. Interacts with MIS18A. Identified in a complex containing MIS18A, OIP5/MIS18B, MIS18BP1, RBBP7 and RBBP4. Interacts with KAT7/HBO1. Interacts (via N-terminus) with FLNA (via N-terminus).

It localises to the nucleus. Its subcellular location is the chromosome. It is found in the centromere. Its function is as follows. Required for recruitment of CENPA to centromeres and normal chromosome segregation during mitosis. This Mus musculus (Mouse) protein is Mis18-binding protein 1 (Mis18bp1).